Here is a 118-residue protein sequence, read N- to C-terminus: SPbeta prophage-derived uncharacterized protein YomS (118 aa).

The polypeptide is SPbeta prophage-derived uncharacterized protein YomS (yomS) (Bacillus subtilis (strain 168)).